The primary structure comprises 99 residues: DNA-directed RNA polymerase subunit omega (99 aa).

This sequence belongs to the RNA polymerase subunit omega family. In terms of assembly, the RNAP catalytic core consists of 2 alpha, 1 beta, 1 beta' and 1 omega subunit. When a sigma factor is associated with the core the holoenzyme is formed, which can initiate transcription.

It catalyses the reaction RNA(n) + a ribonucleoside 5'-triphosphate = RNA(n+1) + diphosphate. In terms of biological role, promotes RNA polymerase assembly. Latches the N- and C-terminal regions of the beta' subunit thereby facilitating its interaction with the beta and alpha subunits. This is DNA-directed RNA polymerase subunit omega from Deinococcus deserti (strain DSM 17065 / CIP 109153 / LMG 22923 / VCD115).